A 349-amino-acid polypeptide reads, in one-letter code: Zinc-type alcohol dehydrogenase-like protein PB24D3.08c (349 aa).

The protein belongs to the zinc-containing alcohol dehydrogenase family. Quinone oxidoreductase subfamily.

It localises to the cytoplasm. It is found in the nucleus. This Schizosaccharomyces pombe (strain 972 / ATCC 24843) (Fission yeast) protein is Zinc-type alcohol dehydrogenase-like protein PB24D3.08c.